The chain runs to 436 residues: Trigger factor (436 aa).

The region spanning 164-249 (GDTVVIDFEG…IHEVKTKELP (86 aa)) is the PPIase FKBP-type domain.

This sequence belongs to the FKBP-type PPIase family. Tig subfamily.

The protein resides in the cytoplasm. It catalyses the reaction [protein]-peptidylproline (omega=180) = [protein]-peptidylproline (omega=0). Its function is as follows. Involved in protein export. Acts as a chaperone by maintaining the newly synthesized protein in an open conformation. Functions as a peptidyl-prolyl cis-trans isomerase. The sequence is that of Trigger factor from Ligilactobacillus salivarius (strain UCC118) (Lactobacillus salivarius).